Reading from the N-terminus, the 221-residue chain is 7-cyano-7-deazaguanine synthase (221 aa).

10 to 20 (FSGGQDSTTCL) is a binding site for ATP. Residues C186, C195, C198, and C201 each coordinate Zn(2+).

This sequence belongs to the QueC family. As to quaternary structure, homodimer. Zn(2+) is required as a cofactor.

It catalyses the reaction 7-carboxy-7-deazaguanine + NH4(+) + ATP = 7-cyano-7-deazaguanine + ADP + phosphate + H2O + H(+). It functions in the pathway purine metabolism; 7-cyano-7-deazaguanine biosynthesis. In terms of biological role, catalyzes the ATP-dependent conversion of 7-carboxy-7-deazaguanine (CDG) to 7-cyano-7-deazaguanine (preQ(0)). This Geobacillus kaustophilus (strain HTA426) protein is 7-cyano-7-deazaguanine synthase.